We begin with the raw amino-acid sequence, 75 residues long: UPF0150 protein TM_1313 (75 aa).

This sequence belongs to the UPF0150 family.

The protein is UPF0150 protein TM_1313 of Thermotoga maritima (strain ATCC 43589 / DSM 3109 / JCM 10099 / NBRC 100826 / MSB8).